The primary structure comprises 431 residues: Histidine--tRNA ligase (431 aa).

It belongs to the class-II aminoacyl-tRNA synthetase family. Homodimer.

Its subcellular location is the cytoplasm. It catalyses the reaction tRNA(His) + L-histidine + ATP = L-histidyl-tRNA(His) + AMP + diphosphate + H(+). In Leifsonia xyli subsp. xyli (strain CTCB07), this protein is Histidine--tRNA ligase (hisS).